The following is a 174-amino-acid chain: MTGLNTAGHDRDYDTAGLNRELQDKGFLLTTTEDLINWARTGSLHWMTFGLACCAVEMMHTSMPRYDVERFGVAPRASPRQSDVMIVAGTLTNKMAPALRKVYDQMPEPRYVISMGSCANGGGYYHYSYSVVRGCDRIVPVDIYVPGCPPTAEALLYGILQLQRRIRRTGTITR.

Cysteine 53, cysteine 54, cysteine 118, and cysteine 148 together coordinate [4Fe-4S] cluster.

Belongs to the complex I 20 kDa subunit family. In terms of assembly, NDH-1 is composed of 14 different subunits. Subunits NuoB, C, D, E, F, and G constitute the peripheral sector of the complex. It depends on [4Fe-4S] cluster as a cofactor.

It is found in the cell inner membrane. It carries out the reaction a quinone + NADH + 5 H(+)(in) = a quinol + NAD(+) + 4 H(+)(out). Its function is as follows. NDH-1 shuttles electrons from NADH, via FMN and iron-sulfur (Fe-S) centers, to quinones in the respiratory chain. Couples the redox reaction to proton translocation (for every two electrons transferred, four hydrogen ions are translocated across the cytoplasmic membrane), and thus conserves the redox energy in a proton gradient. This chain is NADH-quinone oxidoreductase subunit B 2, found in Cereibacter sphaeroides (strain ATCC 17025 / ATH 2.4.3) (Rhodobacter sphaeroides).